Here is a 251-residue protein sequence, read N- to C-terminus: tRNA-cytidine(32) 2-sulfurtransferase 1 (251 aa).

Positions 33–38 (SGGKDS) match the PP-loop motif motif. [4Fe-4S] cluster-binding residues include Cys-108, Cys-111, and Cys-199.

Belongs to the TtcA family. As to quaternary structure, homodimer. Requires Mg(2+) as cofactor. [4Fe-4S] cluster is required as a cofactor.

The protein resides in the cytoplasm. It carries out the reaction cytidine(32) in tRNA + S-sulfanyl-L-cysteinyl-[cysteine desulfurase] + AH2 + ATP = 2-thiocytidine(32) in tRNA + L-cysteinyl-[cysteine desulfurase] + A + AMP + diphosphate + H(+). It participates in tRNA modification. Functionally, catalyzes the ATP-dependent 2-thiolation of cytidine in position 32 of tRNA, to form 2-thiocytidine (s(2)C32). The sulfur atoms are provided by the cysteine/cysteine desulfurase (IscS) system. This Francisella tularensis subsp. holarctica (strain FTNF002-00 / FTA) protein is tRNA-cytidine(32) 2-sulfurtransferase 1.